Here is a 506-residue protein sequence, read N- to C-terminus: Probable lipid II flippase MurJ (506 aa).

Transmembrane regions (helical) follow at residues tyrosine 4–valine 24, threonine 86–alanine 106, valine 127–valine 147, isoleucine 153–phenylalanine 173, isoleucine 181–alanine 201, isoleucine 232–leucine 252, alanine 263–phenylalanine 283, isoleucine 308–leucine 328, threonine 345–phenylalanine 365, threonine 377–isoleucine 397, leucine 405–leucine 425, isoleucine 436–phenylalanine 456, and leucine 474–isoleucine 494.

It belongs to the MurJ/MviN family.

It is found in the cell inner membrane. It participates in cell wall biogenesis; peptidoglycan biosynthesis. Involved in peptidoglycan biosynthesis. Transports lipid-linked peptidoglycan precursors from the inner to the outer leaflet of the cytoplasmic membrane. This chain is Probable lipid II flippase MurJ, found in Borreliella burgdorferi (strain ATCC 35210 / DSM 4680 / CIP 102532 / B31) (Borrelia burgdorferi).